We begin with the raw amino-acid sequence, 309 residues long: L-aminoadipate-semialdehyde dehydrogenase-phosphopantetheinyl transferase (309 aa).

Residues R47, 86-91 (RTSKGK), and 108-111 (NISH) each bind CoA. Residues D129 and E181 each coordinate Mg(2+). CoA is bound at residue 181–185 (ESFIK).

It belongs to the P-Pant transferase superfamily. AcpS family. Monomer. Requires Mg(2+) as cofactor.

It localises to the cytoplasm. The protein resides in the cytosol. It carries out the reaction apo-[ACP] + CoA = holo-[ACP] + adenosine 3',5'-bisphosphate + H(+). The enzyme catalyses apo-[ACP] + acetyl-CoA = acetyl-[ACP] + adenosine 3',5'-bisphosphate + H(+). Its function is as follows. Catalyzes the post-translational modification of target proteins by phosphopantetheine. Can transfer the 4'-phosphopantetheine moiety from coenzyme A, regardless of whether the CoA is presented in the free thiol form or as an acetyl thioester, to a serine residue of a broad range of acceptors including the acyl carrier domain of FASN. The chain is L-aminoadipate-semialdehyde dehydrogenase-phosphopantetheinyl transferase (Aasdhppt) from Rattus norvegicus (Rat).